Here is an 807-residue protein sequence, read N- to C-terminus: PGC-1 and ERR-induced regulator in muscle protein 1 (807 aa).

Disordered regions lie at residues 29–80 (QADL…EDVA), 121–391 (CPGQ…TPAS), and 517–548 (PSHE…AGSR). Low complexity-rich tracts occupy residues 40–52 (SSDI…SGSS) and 145–160 (PAPS…PESP). The span at 162–171 (HSDNPQSSPD) shows a compositional bias: polar residues. Residues 180 to 194 (PGRKKRRAVGAKGTK) show a composition bias toward basic residues. 3 stretches are compositionally biased toward polar residues: residues 195–211 (HSGS…SPQL), 311–346 (KPQS…STPA), and 363–391 (ALST…TPAS). S198 carries the post-translational modification Phosphoserine. At T534 the chain carries Phosphothreonine. R548 is modified (omega-N-methylarginine).

In terms of tissue distribution, highly expressed in skeletal muscles and heart with lower levels in brown adipose tissue (at protein level). Muscle-specific expression is increased by endurance exercise.

The protein resides in the cytoplasm. Its subcellular location is the nucleus. Its function is as follows. Regulates the expression of selective PPARGC1A/B and ESRRA/B/G target genes with roles in glucose and lipid metabolism, energy transfer, contractile function, muscle mitochondrial biogenesis and oxidative capacity. Required for the efficient induction of MT-CO2, MT-CO3, COX4I1, TFB1M, TFB2M, POLRMT and SIRT3 by PPARGC1A. Positively regulates the PPARGC1A/ESRRG-induced expression of CKMT2, TNNI3 and SLC2A4 and negatively regulates the PPARGC1A/ESRRG-induced expression of PDK4. This chain is PGC-1 and ERR-induced regulator in muscle protein 1 (Perm1), found in Mus musculus (Mouse).